The sequence spans 185 residues: Elongation factor P (185 aa).

This sequence belongs to the elongation factor P family.

Its subcellular location is the cytoplasm. It participates in protein biosynthesis; polypeptide chain elongation. Functionally, involved in peptide bond synthesis. Stimulates efficient translation and peptide-bond synthesis on native or reconstituted 70S ribosomes in vitro. Probably functions indirectly by altering the affinity of the ribosome for aminoacyl-tRNA, thus increasing their reactivity as acceptors for peptidyl transferase. This chain is Elongation factor P, found in Lactococcus lactis subsp. cremoris (strain MG1363).